Here is a 669-residue protein sequence, read N- to C-terminus: RNA-binding protein 14 (669 aa).

RRM domains lie at 1 to 73 (MKIF…MSRP) and 79 to 149 (WKIF…LSTK). Residues K126, K135, K138, K149, and K153 each participate in a glycyl lysine isopeptide (Lys-Gly) (interchain with G-Cter in SUMO2) cross-link. Disordered stretches follow at residues 148–175 (TKGQKKGPGLAIQSGDKTKKPGAGDTAF) and 193–232 (NSTGGFDGQARQPTPPFFGRDRSPLRRSPPRASYVAPLTA). S161 carries the post-translational modification Phosphoserine. N6-acetyllysine; alternate is present on K164. K164 participates in a covalent cross-link: Glycyl lysine isopeptide (Lys-Gly) (interchain with G-Cter in SUMO2); alternate. Phosphothreonine is present on T206. S220, S242, S244, S256, S272, and S280 each carry phosphoserine. The interval 284-303 (PYRGQLASPSSQSAAASSLG) is disordered. A compositionally biased stretch (low complexity) spans 287–303 (GQLASPSSQSAAASSLG). Residues 307-354 (GAQPSASALSSYGGQPAAASSLNSYGAQGSSLASYGNQPSSYGAQAAS) form a TRBP-interacting domain; interaction with STIL region. A phosphoserine mark is found at S520, S523, S527, and S562. Positions 569–590 (ANSTPPPYERTRLSPPRASYDD) are disordered. T572 carries the post-translational modification Phosphothreonine. The residue at position 582 (S582) is a Phosphoserine. K600 participates in a covalent cross-link: Glycyl lysine isopeptide (Lys-Gly) (interchain with G-Cter in SUMO2). 6 positions are modified to phosphoserine: S618, S620, S623, S627, S643, and S649.

Interacts with NCOA6, CITED1 and XRCC5/KU86. Interacts with SS18. Interacts with STIL and interferes with its interaction with CPAP. Interacts with gamma-tubulin. Part of the HDP-RNP complex composed of at least HEXIM1, PRKDC, XRCC5, XRCC6, paraspeckle proteins (SFPQ, NONO, PSPC1, RBM14, and MATR3) and NEAT1 RNA.

Its subcellular location is the nucleus. The protein localises to the nucleolus. It is found in the cytoplasm. In terms of biological role, may function as a nuclear receptor coactivator, enhancing transcription through other coactivators such as NCOA6 and CITED1. Regulates centriole biogenesis by suppressing the formation of aberrant centriolar protein complexes in the cytoplasm and thus preserving mitotic spindle integrity. Prevents the formation of the STIL-CPAP complex (which can induce the formation of aberrant centriolar protein complexes) by interfering with the interaction of STIL with CPAP. Plays a role in the regulation of DNA virus-mediated innate immune response by assembling into the HDP-RNP complex, a complex that serves as a platform for IRF3 phosphorylation and subsequent innate immune response activation through the cGAS-STING pathway. The polypeptide is RNA-binding protein 14 (RBM14) (Bos taurus (Bovine)).